A 324-amino-acid chain; its full sequence is Antihemorrhagic factor jMSF (324 aa).

Positions 1 to 19 (MHFLVALVLLGQIIGSTLS) are cleaved as a signal peptide. Cystatin fetuin-A-type domains follow at residues 22–130 (VRGD…VKCH) and 141–254 (RNCP…SDCV). The short motif at 23–25 (RGD) is the Cell attachment site element. 7 disulfides stabilise this stretch: Cys-28–Cys-315, Cys-85–Cys-96, Cys-110–Cys-129, Cys-143–Cys-146, Cys-205–Cys-217, Cys-230–Cys-253, and Cys-287–Cys-291. N-linked (GlcNAc...) asparagine glycosylation occurs at Asn-204. N-linked (GlcNAc...) asparagine glycosylation occurs at Asn-282.

Homodimer. In terms of tissue distribution, expressed by the liver.

The protein resides in the secreted. Suppress hemorrhage induced by metalloproteinases from the same venom (brevilysin-H3, -H4, -H6) and from habu venom (weak inhibition of the metalloproteinases HR2A). The non-hemorrhagic brevilysin-H2 is strongly inhibited by jMSF, whereas the brevilysin-L6 is not inhibited. Does not inhibit serine and cysteine proteases such as trypsin, chymotrypsin, thermolysin, and papain. The inhibition may occur by formation of a non-covalent complex between this protein and the proteinases at their metalloproteinase domains. In Gloydius blomhoffii (Mamushi), this protein is Antihemorrhagic factor jMSF.